We begin with the raw amino-acid sequence, 361 residues long: Glyceraldehyde-3-phosphate dehydrogenase, glycosomal (361 aa).

NAD(+)-binding positions include 13 to 14, Asp39, Gln92, and Ser135; that span reads RI. Residues 166–168, Thr198, 227–228, and Arg250 each bind D-glyceraldehyde 3-phosphate; these read SCT and TG. The active-site Nucleophile is the Cys167. An NAD(+)-binding site is contributed by Asn336. The Microbody targeting signal signature appears at 359–361; sequence SKM.

Belongs to the glyceraldehyde-3-phosphate dehydrogenase family. Homotetramer.

The protein resides in the glycosome. The catalysed reaction is D-glyceraldehyde 3-phosphate + phosphate + NAD(+) = (2R)-3-phospho-glyceroyl phosphate + NADH + H(+). It functions in the pathway carbohydrate degradation; glycolysis; pyruvate from D-glyceraldehyde 3-phosphate: step 1/5. In Leishmania mexicana, this protein is Glyceraldehyde-3-phosphate dehydrogenase, glycosomal (GAPG).